The sequence spans 79 residues: Small ribosomal subunit protein bS18 (79 aa).

It belongs to the bacterial ribosomal protein bS18 family. In terms of assembly, part of the 30S ribosomal subunit. Forms a tight heterodimer with protein bS6.

Functionally, binds as a heterodimer with protein bS6 to the central domain of the 16S rRNA, where it helps stabilize the platform of the 30S subunit. This is Small ribosomal subunit protein bS18 from Streptococcus pneumoniae serotype 19F (strain G54).